The following is a 445-amino-acid chain: Phosphoglucosamine mutase (445 aa).

Residue Ser-101 is the Phosphoserine intermediate of the active site. Ser-101, Asp-240, Asp-242, and Asp-244 together coordinate Mg(2+). Phosphoserine is present on Ser-101.

The protein belongs to the phosphohexose mutase family. It depends on Mg(2+) as a cofactor. Activated by phosphorylation.

The catalysed reaction is alpha-D-glucosamine 1-phosphate = D-glucosamine 6-phosphate. In terms of biological role, catalyzes the conversion of glucosamine-6-phosphate to glucosamine-1-phosphate. The sequence is that of Phosphoglucosamine mutase from Pseudomonas aeruginosa (strain UCBPP-PA14).